The following is a 328-amino-acid chain: GTP 3',8-cyclase (328 aa).

The region spanning 1-229 (MNQVDYLRIS…DAQVRGSGPA (229 aa)) is the Radical SAM core domain. Arg-8 provides a ligand contact to GTP. [4Fe-4S] cluster-binding residues include Cys-15 and Cys-19. Tyr-21 provides a ligand contact to S-adenosyl-L-methionine. Cys-22 lines the [4Fe-4S] cluster pocket. Arg-60 is a GTP binding site. S-adenosyl-L-methionine is bound at residue Gly-64. Residue Thr-91 participates in GTP binding. Ser-115 is a binding site for S-adenosyl-L-methionine. A GTP-binding site is contributed by Lys-155. Met-189 serves as a coordination point for S-adenosyl-L-methionine. Positions 252 and 255 each coordinate [4Fe-4S] cluster. 257–259 (RMR) lines the GTP pocket. Cys-269 serves as a coordination point for [4Fe-4S] cluster.

The protein belongs to the radical SAM superfamily. MoaA family. In terms of assembly, monomer and homodimer. It depends on [4Fe-4S] cluster as a cofactor.

It carries out the reaction GTP + AH2 + S-adenosyl-L-methionine = (8S)-3',8-cyclo-7,8-dihydroguanosine 5'-triphosphate + 5'-deoxyadenosine + L-methionine + A + H(+). The protein operates within cofactor biosynthesis; molybdopterin biosynthesis. In terms of biological role, catalyzes the cyclization of GTP to (8S)-3',8-cyclo-7,8-dihydroguanosine 5'-triphosphate. The chain is GTP 3',8-cyclase from Trichormus variabilis (strain ATCC 29413 / PCC 7937) (Anabaena variabilis).